A 496-amino-acid polypeptide reads, in one-letter code: Chromosomal replication initiator protein DnaA (496 aa).

A domain I, interacts with DnaA modulators region spans residues 1–76; it reads MKMDSAVSEE…TELWQEENPQ (76 aa). A domain II region spans residues 76–150; that stretch reads QILKVEVVVR…AAATDAVLGS (75 aa). The segment at 151 to 373 is domain III, AAA+ region; that stretch reads PLDPRYTFDT…GAFNQLLFRQ (223 aa). 4 residues coordinate ATP: glycine 197, glycine 199, lysine 200, and threonine 201. Positions 374–496 are domain IV, binds dsDNA; it reads SFEPNISIDR…LKRLINDQAA (123 aa).

It belongs to the DnaA family. Oligomerizes as a right-handed, spiral filament on DNA at oriC.

Its subcellular location is the cytoplasm. In terms of biological role, plays an essential role in the initiation and regulation of chromosomal replication. ATP-DnaA binds to the origin of replication (oriC) to initiate formation of the DNA replication initiation complex once per cell cycle. Binds the DnaA box (a 9 base pair repeat at the origin) and separates the double-stranded (ds)DNA. Forms a right-handed helical filament on oriC DNA; dsDNA binds to the exterior of the filament while single-stranded (ss)DNA is stabiized in the filament's interior. The ATP-DnaA-oriC complex binds and stabilizes one strand of the AT-rich DNA unwinding element (DUE), permitting loading of DNA polymerase. After initiation quickly degrades to an ADP-DnaA complex that is not apt for DNA replication. Binds acidic phospholipids. In Brucella suis biovar 1 (strain 1330), this protein is Chromosomal replication initiator protein DnaA.